Consider the following 489-residue polypeptide: Glycogen synthase (489 aa).

Lysine 15 is a binding site for ADP-alpha-D-glucose.

It belongs to the glycosyltransferase 1 family. Bacterial/plant glycogen synthase subfamily.

The enzyme catalyses [(1-&gt;4)-alpha-D-glucosyl](n) + ADP-alpha-D-glucose = [(1-&gt;4)-alpha-D-glucosyl](n+1) + ADP + H(+). It participates in glycan biosynthesis; glycogen biosynthesis. Its function is as follows. Synthesizes alpha-1,4-glucan chains using ADP-glucose. The chain is Glycogen synthase from Francisella tularensis subsp. mediasiatica (strain FSC147).